Consider the following 1393-residue polypeptide: DNA-directed RNA polymerase subunit beta' (1393 aa).

Zn(2+) is bound by residues Cys-71, Cys-73, Cys-86, and Cys-89. Positions 462, 464, and 466 each coordinate Mg(2+). Zn(2+) is bound by residues Cys-811, Cys-885, Cys-892, and Cys-895.

The protein belongs to the RNA polymerase beta' chain family. The RNAP catalytic core consists of 2 alpha, 1 beta, 1 beta' and 1 omega subunit. When a sigma factor is associated with the core the holoenzyme is formed, which can initiate transcription. Mg(2+) is required as a cofactor. Requires Zn(2+) as cofactor.

It carries out the reaction RNA(n) + a ribonucleoside 5'-triphosphate = RNA(n+1) + diphosphate. Its function is as follows. DNA-dependent RNA polymerase catalyzes the transcription of DNA into RNA using the four ribonucleoside triphosphates as substrates. This chain is DNA-directed RNA polymerase subunit beta', found in Azorhizobium caulinodans (strain ATCC 43989 / DSM 5975 / JCM 20966 / LMG 6465 / NBRC 14845 / NCIMB 13405 / ORS 571).